The following is a 149-amino-acid chain: Nucleoside diphosphate kinase (149 aa).

Lysine 9, phenylalanine 57, arginine 85, threonine 91, arginine 102, and asparagine 112 together coordinate ATP. The active-site Pros-phosphohistidine intermediate is histidine 115.

This sequence belongs to the NDK family. In terms of assembly, homotetramer. The cofactor is Mg(2+).

The protein localises to the cytoplasm. The enzyme catalyses a 2'-deoxyribonucleoside 5'-diphosphate + ATP = a 2'-deoxyribonucleoside 5'-triphosphate + ADP. The catalysed reaction is a ribonucleoside 5'-diphosphate + ATP = a ribonucleoside 5'-triphosphate + ADP. Major role in the synthesis of nucleoside triphosphates other than ATP. The ATP gamma phosphate is transferred to the NDP beta phosphate via a ping-pong mechanism, using a phosphorylated active-site intermediate. The polypeptide is Nucleoside diphosphate kinase (Desulforamulus reducens (strain ATCC BAA-1160 / DSM 100696 / MI-1) (Desulfotomaculum reducens)).